A 597-amino-acid polypeptide reads, in one-letter code: C4b-binding protein alpha chain (597 aa).

A signal peptide spans 1–48 (MHPPKTPSGALHRKRKMAAWPFSRLWKVSDPILFQMTLIAALLPAVLG). Sushi domains lie at 49 to 110 (NCGP…FCIY), 111 to 172 (KRCR…QCEI), 173 to 236 (VKCK…TCEK), 237 to 296 (ITCR…ACEP), 297 to 362 (NSCI…GCEA), 363 to 424 (LCCP…SCGD), 425 to 482 (ICNF…QCKA), and 483 to 540 (LCRK…KCEW). 16 disulfide bridges follow: Cys50–Cys96, Cys81–Cys108, Cys113–Cys154, Cys140–Cys170, Cys175–Cys217, Cys203–Cys234, Cys239–Cys281, Cys267–Cys294, Cys299–Cys348, Cys332–Cys360, Cys365–Cys409, Cys399–Cys422, Cys426–Cys468, Cys454–Cys480, Cys484–Cys525, and Cys511–Cys538. An N-linked (GlcNAc...) asparagine glycan is attached at Asn221. N-linked (GlcNAc...) asparagine glycosylation is found at Asn506 and Asn528.

In terms of assembly, disulfide-linked complex of alpha and beta chains of 3 possible sorts: a 570 kDa complex of 7 alpha chains and 1 beta chain, a 530 kDa homoheptamer of alpha chains or a 500 kDa complex of 6 alpha chains and 1 beta chain. The central body of the alpha chain homomer supports tentacles, each with the binding site for C4b at the end. (Microbial infection) Interacts with Staphylococcus aureus protein SdrE; this interaction inhibits complement-mediated bacterial opsonization. As to expression, chylomicrons in the plasma.

Its subcellular location is the secreted. In terms of biological role, controls the classical pathway of complement activation. It binds as a cofactor to C3b/C4b inactivator (C3bINA), which then hydrolyzes the complement fragment C4b. It also accelerates the degradation of the C4bC2a complex (C3 convertase) by dissociating the complement fragment C2a. Alpha chain binds C4b. It also interacts with anticoagulant protein S and with serum amyloid P component. The protein is C4b-binding protein alpha chain (C4BPA) of Homo sapiens (Human).